The sequence spans 888 residues: Potassium channel AKT6 (888 aa).

The Cytoplasmic segment spans residues 1–84 (MEKKKVWFWG…PFDPRYRAWE (84 aa)). The disordered stretch occupies residues 10–31 (GVKDDGEGGGGRGGGRTKDAED). Residues 85-105 (TFLVFLVLYTAWASPFEFGFL) form a helical membrane-spanning segment. The Extracellular portion of the chain corresponds to 106–113 (QKPRPPLS). A helical membrane pass occupies residues 114 to 134 (ILDNIVNGFFAVDIVLTFFVA). At 135–155 (FLDKVTYLLVDDPKRIAWRYA) the chain is on the cytoplasmic side. Residues 156–176 (STWLIFDVVSTFPYEIFGSLL) form a helical membrane-spanning segment. The Extracellular segment spans residues 177–184 (HESIQGYG). Residues 185–205 (IFSMLRLWRLRRVSNCFARLE) form a helical; Voltage-sensor membrane-spanning segment. Residues 206 to 219 (KDRKYSYFWVRCSK) lie on the Cytoplasmic side of the membrane. Residues 220–240 (LLLVTLFVIHCGACFLYSIAA) traverse the membrane as a helical segment. The Extracellular portion of the chain corresponds to 241-267 (HYPDPSKTFMALTDENWKESPIAVRYN). An intramembrane region (pore-forming) is located at residues 268–287 (TAMYWSITTFSTTGYGDIHG). At 288–291 (VNSR) the chain is on the extracellular side. Residues 292-312 (EMTFILFYMVFNLGLSAYIIG) form a helical membrane-spanning segment. Residues 313–888 (NMTNLVVHVT…GDFLLLSRDP (576 aa)) are Cytoplasmic-facing. Residue 398–519 (LFHGISNDLL…IMNNLLQHLK (122 aa)) participates in a nucleoside 3',5'-cyclic phosphate binding. ANK repeat units follow at residues 543-572 (DLPLSLCFAAARGDDLLLHQLLRRGSSPNE), 576-605 (DGRTALHIAASKGSHYCVVLLLEHGADPNI), 609-638 (EGNVPLWEAIIGRHREIAKLLAENGAKLSL), 640-669 (SVSYFSGLAVEKNCLDALKDIIKYGGDVTL), and 673-702 (NGTTALHRAVSEGHLEIVKFLLDQGADLDW). A KHA domain is found at 822 to 888 (RVTISSPENG…GDFLLLSRDP (67 aa)).

The protein belongs to the potassium channel family. Plant (TC 1.A.1.4) subfamily. In terms of assembly, the potassium channel is probably composed of a homo- or heterotetrameric complex of pore-forming subunits. In terms of tissue distribution, predominantly expressed in flowers; especially in pollen.

It is found in the membrane. In terms of biological role, highly selective inward-rectifying potassium channel that could mediate potassium uptake in the pollen membrane. Plays an important role in pollen tube development. Assuming opened or closed conformations in response to the voltage difference across the membrane, the channel is activated by hyperpolarization. May interact with the cytoskeleton or with regulatory proteins. This is Potassium channel AKT6 (AKT6) from Arabidopsis thaliana (Mouse-ear cress).